The primary structure comprises 450 residues: Glutamyl-tRNA(Gln) amidotransferase subunit A, mitochondrial (450 aa).

Active-site charge relay system residues include lysine 47 and serine 122. Catalysis depends on serine 146, which acts as the Acyl-ester intermediate.

The protein belongs to the amidase family. GatA subfamily. Subunit of the heterotrimeric GatFAB amidotransferase (AdT) complex, composed of A, B and F subunits.

Its subcellular location is the mitochondrion. The catalysed reaction is L-glutamyl-tRNA(Gln) + L-glutamine + ATP + H2O = L-glutaminyl-tRNA(Gln) + L-glutamate + ADP + phosphate + H(+). Allows the formation of correctly charged Gln-tRNA(Gln) through the transamidation of misacylated Glu-tRNA(Gln) in the mitochondria. The reaction takes place in the presence of glutamine and ATP through an activated gamma-phospho-Glu-tRNA(Gln). This is Glutamyl-tRNA(Gln) amidotransferase subunit A, mitochondrial from Candida albicans (strain SC5314 / ATCC MYA-2876) (Yeast).